A 244-amino-acid chain; its full sequence is NAD-dependent protein deacetylase (244 aa).

The 244-residue stretch at 1–244 (MSATERQLQY…IGDTCRQLRA (244 aa)) folds into the Deacetylase sirtuin-type domain. NAD(+) contacts are provided by Ala-27, Thr-31, Phe-38, Arg-39, Gln-107, Ile-109, Asp-110, and His-125. Phe-38 contributes to the nicotinamide binding site. Residues Ile-109 and Asp-110 each coordinate nicotinamide. His-125 functions as the Proton acceptor in the catalytic mechanism. Zn(2+) is bound by residues Cys-133, Cys-136, Cys-153, and Cys-156. 4 residues coordinate NAD(+): Ser-192, Ser-193, Asn-217, and Ile-235.

It belongs to the sirtuin family. Class U subfamily. It depends on Zn(2+) as a cofactor.

It localises to the cytoplasm. The catalysed reaction is N(6)-acetyl-L-lysyl-[protein] + NAD(+) + H2O = 2''-O-acetyl-ADP-D-ribose + nicotinamide + L-lysyl-[protein]. NAD-dependent protein deacetylase which modulates the activities of several enzymes which are inactive in their acetylated form. This chain is NAD-dependent protein deacetylase, found in Chromobacterium violaceum (strain ATCC 12472 / DSM 30191 / JCM 1249 / CCUG 213 / NBRC 12614 / NCIMB 9131 / NCTC 9757 / MK).